We begin with the raw amino-acid sequence, 1040 residues long: Multidrug resistance protein MdtB (1040 aa).

12 helical membrane-spanning segments follow: residues 25-45 (LLMA…PVAA), 347-367 (LMLA…NIPA), 369-389 (IIPG…MVFL), 396-416 (LTLM…IVVI), 440-460 (IGFT…PLLF), 472-492 (FAVT…TLTP), 537-557 (WLTL…WIVI), 863-883 (LGST…VLGV), 888-908 (FIHP…ALLA), 910-930 (IIAG…LIGI), 968-988 (ILMT…STGV), and 998-1018 (IAMV…TPVI).

The protein belongs to the resistance-nodulation-cell division (RND) (TC 2.A.6) family. MdtB subfamily. In terms of assembly, part of a tripartite efflux system composed of MdtA, MdtB and MdtC. MdtB forms a heteromultimer with MdtC.

It is found in the cell inner membrane. This chain is Multidrug resistance protein MdtB, found in Salmonella choleraesuis (strain SC-B67).